A 337-amino-acid polypeptide reads, in one-letter code: Methionine import ATP-binding protein MetN (337 aa).

The ABC transporter domain maps to Ile4 to Val240. Gly37–Ser44 provides a ligand contact to ATP.

It belongs to the ABC transporter superfamily. Methionine importer (TC 3.A.1.24) family. As to quaternary structure, the complex is composed of two ATP-binding proteins (MetN), two transmembrane proteins (MetI) and a solute-binding protein (MetQ).

Its subcellular location is the cell membrane. It carries out the reaction L-methionine(out) + ATP + H2O = L-methionine(in) + ADP + phosphate + H(+). The enzyme catalyses D-methionine(out) + ATP + H2O = D-methionine(in) + ADP + phosphate + H(+). Its function is as follows. Part of the ABC transporter complex MetNIQ involved in methionine import. Responsible for energy coupling to the transport system. This Carboxydothermus hydrogenoformans (strain ATCC BAA-161 / DSM 6008 / Z-2901) protein is Methionine import ATP-binding protein MetN.